A 361-amino-acid polypeptide reads, in one-letter code: Dual specificity mitogen-activated protein kinase kinase 6 (361 aa).

Basic and acidic residues-rich tracts occupy residues 1–11 and 37–48; these read MEGGSDKESKV and PKELKLPKEVFE. The segment at 1-61 is disordered; sequence MEGGSDKESK…PAPTPPRDLD (61 aa). The interval 30-46 is d domain; that stretch reads VRGKKKLPKELKLPKEV. In terms of domain architecture, Protein kinase spans 80-341; sequence LEQIGELGRG…YTELMQHPFF (262 aa). ATP-binding positions include 86–94 and Lys109; that span reads LGRGAYGVV. The active-site Proton acceptor is the Asp206. Ser234 is modified (phosphoserine; by MAPK3). Residue Thr238 is modified to Phosphothreonine; by MAPK3. Positions 338–361 are DVD domain; it reads HPFFTLHDSKDTDVASFVKTILGD.

Belongs to the protein kinase superfamily. STE Ser/Thr protein kinase family. MAP kinase kinase subfamily. In terms of assembly, dimer. Interacts (via its D domain) with its MAP kinase substrates. Interacts (via its DVD domain) with MAP3Ks activators. Weakly autophosphorylated. Phosphorylated at Ser-234 and Thr-238 by the majority of M3Ks.

The protein localises to the nucleus. It localises to the cytoplasm. The protein resides in the cytoskeleton. The enzyme catalyses L-seryl-[protein] + ATP = O-phospho-L-seryl-[protein] + ADP + H(+). The catalysed reaction is L-threonyl-[protein] + ATP = O-phospho-L-threonyl-[protein] + ADP + H(+). It carries out the reaction L-tyrosyl-[protein] + ATP = O-phospho-L-tyrosyl-[protein] + ADP + H(+). With respect to regulation, activated by dual phosphorylation on Ser-234 and Thr-238 in response to a variety of cellular stresses, including UV radiation, osmotic shock, hypoxia, inflammatory cytokines, interferon gamma (IFNG), and less often by growth factors. MAP2K6/MKK6 is activated by the majority of M3Ks. Functionally, dual specificity protein kinase which acts as an essential component of the MAP kinase signal transduction pathway. Catalyzes the concomitant phosphorylation of a threonine and a tyrosine residue in the MAP kinases p38 and plays an important role in the regulation of cellular responses to cytokines and all kinds of stresses. The p38 MAP kinase signal transduction pathway leads to direct activation of transcription factors. Phosphorylation by MAP2K6 asymmetrically activates p38 on one side of the blastodisc, an event which is necessary for blastomere cleavage. In Danio rerio (Zebrafish), this protein is Dual specificity mitogen-activated protein kinase kinase 6.